Consider the following 549-residue polypeptide: Exodeoxyribonuclease 7 large subunit (549 aa).

Residues 511–549 form a disordered region; it reads LVATDPPVDPKPTRKPVQKSSSPKPSSRKPKKSQQEDLF.

It belongs to the XseA family. As to quaternary structure, heterooligomer composed of large and small subunits.

The protein resides in the cytoplasm. It carries out the reaction Exonucleolytic cleavage in either 5'- to 3'- or 3'- to 5'-direction to yield nucleoside 5'-phosphates.. Its function is as follows. Bidirectionally degrades single-stranded DNA into large acid-insoluble oligonucleotides, which are then degraded further into small acid-soluble oligonucleotides. The sequence is that of Exodeoxyribonuclease 7 large subunit from Beijerinckia indica subsp. indica (strain ATCC 9039 / DSM 1715 / NCIMB 8712).